The primary structure comprises 232 residues: Lipopolysaccharide core heptose(II) kinase WaaY (232 aa).

It belongs to the protein kinase superfamily. RfaY/WaaY family.

It catalyses the reaction alpha-D-Glc-(1-&gt;3)-[L-alpha-D-Hep-(1-&gt;7)]-L-alpha-D-Hep-(1-&gt;3)-4-O-PO3(2-)-L-alpha-D-Hep-(1-&gt;5)-[alpha-Kdo-(2-&gt;4)]-alpha-Kdo-(2-&gt;6)-lipid A + ATP = alpha-D-Glc-(1-&gt;3)-[L-alpha-D-Hep-(1-&gt;7)]-4-O-PO3(2-)-L-alpha-D-Hep-(1-&gt;3)-4-O-PO3(2-)-L-alpha-D-Hep-(1-&gt;5)-[alpha-Kdo-(2-&gt;4)]-alpha-Kdo-(2-&gt;6)-lipid A + ADP + H(+). It participates in bacterial outer membrane biogenesis; LPS core biosynthesis. Its function is as follows. Kinase involved in the biosynthesis of the core oligosaccharide region of lipopolysaccharide (LPS). Catalyzes the phosphorylation of the second heptose unit (HepII) of the inner core. The polypeptide is Lipopolysaccharide core heptose(II) kinase WaaY (Salmonella typhimurium (strain LT2 / SGSC1412 / ATCC 700720)).